The chain runs to 460 residues: EPD1-interacting receptor-like cytoplasmic serine/threonine-protein kinase 5D (460 aa).

The Protein kinase domain occupies 83 to 364 (FSSANFLGEG…DVVNILEPLL (282 aa)). ATP-binding positions include 89–97 (LGEGGFGPV) and Lys118. Tyr163 and Tyr165 each carry phosphotyrosine. Asp213 functions as the Proton acceptor in the catalytic mechanism.

Belongs to the protein kinase superfamily. Ser/Thr protein kinase family. In terms of assembly, interacts with the V.dahliae elicitor EPD1 (AC G2WWH6). In terms of processing, phosphorylated at Tyr-163 and Tyr-165 in the presence of pathogen-associated molecular patterns (PAMPs); this triggers the expression of pathogenesis-related genes. As to expression, mostly expressed in roots and, to a lesser extent, in leaves.

Its subcellular location is the cell membrane. It carries out the reaction L-seryl-[protein] + ATP = O-phospho-L-seryl-[protein] + ADP + H(+). The catalysed reaction is L-threonyl-[protein] + ATP = O-phospho-L-threonyl-[protein] + ADP + H(+). Its function is as follows. Required for pathogen-associated molecular pattern (PAMP, e.g. chitin and flg22)-triggered immunity (PTI) involving reactive oxygen species (ROS) accumulation and triggering plant defense, including defense-related gene expression (e.g. PR1 and LOX). Ensures specific recognition of the EPD1 effector of Verticillium dahliae, resulting in a hypersensitive response known as effector-triggered immunity (ETI), characterized by the activation of programmed cell death to limit infection by the pathogen. Priming plants with the incompatible pathogen V.dahliae leads to an increased resistance to compatible pathogens, as a result of systemic acquired resistance (SAR). The protein is EPD1-interacting receptor-like cytoplasmic serine/threonine-protein kinase 5D of Gossypium barbadense (Sea Island cotton).